The primary structure comprises 405 residues: Glucoside xylosyltransferase 1 (405 aa).

Over 1–2 the chain is Cytoplasmic; that stretch reads MR. The chain crosses the membrane as a helical; Signal-anchor for type II membrane protein span at residues 3–23; sequence IYLRTFGLCIVVALLSLVFLF. The Lumenal portion of the chain corresponds to 24 to 405; that stretch reads SKHDEGSFSA…RLQRATPPGD (382 aa). The tract at residues 46–65 is disordered; sequence SFNGAKAKQRPTATTSHRDV. 4 N-linked (GlcNAc...) asparagine glycosylation sites follow: asparagine 202, asparagine 243, asparagine 277, and asparagine 372.

The protein belongs to the glycosyltransferase 8 family.

The protein resides in the membrane. It catalyses the reaction 3-O-(beta-D-glucosyl)-L-seryl-[EGF-like domain protein] + UDP-alpha-D-xylose = 3-O-[alpha-D-xylosyl-(1-&gt;3)-beta-D-glucosyl]-L-seryl-[EGF-like domain protein] + UDP + H(+). Glycosyltransferase which elongates the O-linked glucose attached to EGF-like repeats in the extracellular domain of Notch proteins by catalyzing the addition of xylose. This chain is Glucoside xylosyltransferase 1 (gxylt1), found in Danio rerio (Zebrafish).